Here is a 120-residue protein sequence, read N- to C-terminus: Small ribosomal subunit protein uS10 (120 aa).

A phosphoserine mark is found at Ser-16 and Ser-18.

Belongs to the universal ribosomal protein uS10 family. As to expression, expressed ubiquitously in embryos, highest expression is in the midgut.

In Drosophila melanogaster (Fruit fly), this protein is Small ribosomal subunit protein uS10 (RpS20).